Consider the following 255-residue polypeptide: Flap endonuclease Xni (255 aa).

Asp105 lines the Mg(2+) pocket. The 92-residue stretch at Glu162 to Pro253 folds into the 5'-3' exonuclease domain. Residues Leu172, Ala173, Pro181, Val183, and Ile186 each contribute to the K(+) site. Residues Gly185–Ser190 are interaction with DNA.

The protein belongs to the Xni family. Requires Mg(2+) as cofactor. It depends on K(+) as a cofactor.

In terms of biological role, has flap endonuclease activity. During DNA replication, flap endonucleases cleave the 5'-overhanging flap structure that is generated by displacement synthesis when DNA polymerase encounters the 5'-end of a downstream Okazaki fragment. The sequence is that of Flap endonuclease Xni from Shewanella sediminis (strain HAW-EB3).